We begin with the raw amino-acid sequence, 97 residues long: Large ribosomal subunit protein eL21 (97 aa).

The protein belongs to the eukaryotic ribosomal protein eL21 family.

In Methanosarcina barkeri (strain Fusaro / DSM 804), this protein is Large ribosomal subunit protein eL21.